The following is a 343-amino-acid chain: Palmitoyltransferase ZDHHC4 (343 aa).

The Lumenal portion of the chain corresponds to 1–2 (MD). Residues 3 to 23 (FLVLFSFYLAFLLICVIMICI) traverse the membrane as a helical segment. Residues 24–67 (FTKSQRLKAVVLGGAQVCARVTPQCFQRAVQTLLHQLFHTRHPA) are Cytoplasmic-facing. A helical membrane pass occupies residues 68-88 (FLALHLLLQGLVYAEYTYEVF). The Lumenal portion of the chain corresponds to 89 to 95 (SYCRELE). The chain crosses the membrane as a helical span at residues 96–116 (FSLPCLLLPYVLLSVNLVFFT). Residues 117-193 (LTCSTNPGTI…NCIGAWNTGY (77 aa)) are Cytoplasmic-facing. One can recognise a DHHC domain in the interval 149–199 (SRCSTCDLRKPARSKHCRVCDRCVHRFDHHCVWVNNCIGAWNTGYFLIYLL). Residue cysteine 179 is the S-palmitoyl cysteine intermediate of the active site. Residues 194–214 (FLIYLLTLTASAATIAILSAA) form a helical membrane-spanning segment. Topologically, residues 215-255 (FLLRLVAVSNLYQETYLDDLGRFQAVDTGFLIQHLFLAFPR) are lumenal. The chain crosses the membrane as a helical span at residues 256-276 (IIFLLGFVIVLSLLLAGYLCF). The Cytoplasmic segment spans residues 277–343 (ALYLAATNQT…ATPSYKKKKR (67 aa)). Positions 340-343 (KKKR) match the Di-lysine motif motif.

It belongs to the DHHC palmitoyltransferase family. As to quaternary structure, interacts with CPT1A.

The protein localises to the endoplasmic reticulum membrane. It localises to the golgi apparatus membrane. Its subcellular location is the cell membrane. It catalyses the reaction L-cysteinyl-[protein] + hexadecanoyl-CoA = S-hexadecanoyl-L-cysteinyl-[protein] + CoA. Functionally, palmitoyltransferase that could catalyze the addition of palmitate onto protein substrates including the D(2) dopamine receptor DRD2, GSK3B or MAVS. Mediates GSK3B palmitoylation to prevent its AKT1-mediated phosphorylation leading to activation of the STAT3 signaling pathway. Also catalyzes MAVS palmitoylation which promotes its stabilization and activation by inhibiting 'Lys-48'- but facilitating 'Lys-63'-linked ubiquitination. This Rattus norvegicus (Rat) protein is Palmitoyltransferase ZDHHC4.